A 138-amino-acid polypeptide reads, in one-letter code: Basic phospholipase A2 homolog Ts-K49a (138 aa).

The signal sequence occupies residues 1–16; sequence MRTLWIMAVLLLGVEG. 7 disulfides stabilise this stretch: Cys-42-Cys-131, Cys-44-Cys-60, Cys-59-Cys-111, Cys-65-Cys-138, Cys-66-Cys-104, Cys-73-Cys-97, and Cys-91-Cys-102. Positions 121-133 are important for membrane-damaging activities in eukaryotes and bacteria; heparin-binding; sequence KKKKINLKLFCKK.

As to expression, expressed by the venom gland.

The protein resides in the secreted. Its function is as follows. Snake venom phospholipase A2 homolog that lacks catalytic activity. It shows myotoxic and weak anticoagulant activities and induces local edema a few hours after injection (5-10 ug) in the hind paw. A model of myotoxic mechanism has been proposed: an apo Lys49-PLA2 is activated by the entrance of a hydrophobic molecule (e.g. fatty acid) at the hydrophobic channel of the protein leading to a reorientation of a monomer. This reorientation causes a transition between 'inactive' to 'active' states, causing alignment of C-terminal and membrane-docking sites (MDoS) side-by-side and putting the membrane-disruption sites (MDiS) in the same plane, exposed to solvent and in a symmetric position for both monomers. The MDoS region stabilizes the toxin on membrane by the interaction of charged residues with phospholipid head groups. Subsequently, the MDiS region destabilizes the membrane with penetration of hydrophobic residues. This insertion causes a disorganization of the membrane, allowing an uncontrolled influx of ions (i.e. calcium and sodium), and eventually triggering irreversible intracellular alterations and cell death. In Trimeresurus stejnegeri (Chinese green tree viper), this protein is Basic phospholipase A2 homolog Ts-K49a.